A 340-amino-acid chain; its full sequence is MTEKNAYAQSGVDIEAGYEVVARIKKHVARTERLGVMGALGGFGGMFDLSQLDVKEPVLISGTDGVGTKLMLAIKYDKHNTIGQDCVAMCVNDIIAAGAEPLYFLDYIATGKNEPAKLEQVVAGVAEGCVQAGAGLIGGETAEMPGMYGKDDYDLAGFAVGVAEKSQIIDGSKVKEGDVLLGLASSGIHSNGYSLVRRVFADYTGEEELPELEGKKLKDVLLEPTRIYVKAALPLIKEELVNGIAHITGGGFIENVPRMFGDDLAAEIEEDKVPVLPIFKALEKYGEIKHDEMFEIFNMGIGLMLAVSPEKVDRVKEVLDEPVYELGRIVKKADASVVIK.

This sequence belongs to the AIR synthase family.

The protein localises to the cytoplasm. The catalysed reaction is 2-formamido-N(1)-(5-O-phospho-beta-D-ribosyl)acetamidine + ATP = 5-amino-1-(5-phospho-beta-D-ribosyl)imidazole + ADP + phosphate + H(+). Its pathway is purine metabolism; IMP biosynthesis via de novo pathway; 5-amino-1-(5-phospho-D-ribosyl)imidazole from N(2)-formyl-N(1)-(5-phospho-D-ribosyl)glycinamide: step 2/2. This chain is Phosphoribosylformylglycinamidine cyclo-ligase, found in Streptococcus mutans serotype c (strain ATCC 700610 / UA159).